The sequence spans 311 residues: Aurora kinase (311 aa).

The 281-residue stretch at 20-300 (FEIGRFLGRG…IEDILRHPFL (281 aa)) folds into the Protein kinase domain. Lys49 provides a ligand contact to ATP. The Proton acceptor role is filled by Asp143. An activation loop region spans residues 189–216 (DFGWSVHHPTHGGRRRTQCGTLDYLPPE). Residue Thr205 is modified to Phosphothreonine; by autocatalysis. The short motif at 280 to 299 (MLIRSPEARISIEDILRHPF) is the Destruction (D)-box element.

The protein belongs to the protein kinase superfamily. Ser/Thr protein kinase family. Aurora subfamily. As to quaternary structure, interacts with EB1 (via C-terminal residues 101-238). Phosphorylated in mitosis and cytokinesis. Activated by autophosphorylation at Thr-205.

Its subcellular location is the nucleus. The protein localises to the cytoplasm. The protein resides in the cytoskeleton. It localises to the microtubule organizing center. It is found in the centrosome. Its subcellular location is the spindle. The protein localises to the spindle pole. The protein resides in the nucleus membrane. It catalyses the reaction L-seryl-[protein] + ATP = O-phospho-L-seryl-[protein] + ADP + H(+). It carries out the reaction L-threonyl-[protein] + ATP = O-phospho-L-threonyl-[protein] + ADP + H(+). With respect to regulation, activated by cell-cycle phase specific phosphorylation. Inhibited by ATP-competitive inhibitors N-[4-[[6-Methoxy-7-[3-(4-morpholinyl)propoxy]-4-quinazolinyl]amino]phenyl]benzamide (ZM447439) and cyclopropanecarboxylic acid-(3-(4-(3-trifluoromethylphenylamino)-pyrimidin-2-ylamino)-phenyl)-amide (CFPPA). Inhibition leads to reduced growth, increased cytokinesis, microtubular defects, and increased ploidy of the cells. Functionally, involved in regulation of the cell cycle. Required for mitotic cell division and cytokinesis. Based on its localization to centrosomes and spindle microtubules, as well as to various cytoskeletal components such as the median body, parental attachment disk, and anterior and posterior-lateral paraflagellar dense rods, may coordinate reorganization and segregation of tubulin-containing structures during mitosis and cytokinesis. May regulate microtubule disassembly by phosphorylating cytoskeletal proteins leading to their destabilization. Phosphorylates EB1 at 'Ser-148' in vitro. Phosphorylates histone H3 in vitro. The chain is Aurora kinase from Giardia intestinalis (strain ATCC 50803 / WB clone C6) (Giardia lamblia).